We begin with the raw amino-acid sequence, 538 residues long: Eukaryotic translation initiation factor 3 subunit L (538 aa).

In terms of domain architecture, PCI spans 305-513 (TFSDILLYIQ…IHIADTKVSH (209 aa)).

The protein belongs to the eIF-3 subunit L family. As to quaternary structure, component of the eukaryotic translation initiation factor 3 (eIF-3) complex. The eIF-3 complex interacts with pix.

It localises to the cytoplasm. Its function is as follows. Component of the eukaryotic translation initiation factor 3 (eIF-3) complex, which is involved in protein synthesis of a specialized repertoire of mRNAs and, together with other initiation factors, stimulates binding of mRNA and methionyl-tRNAi to the 40S ribosome. The eIF-3 complex specifically targets and initiates translation of a subset of mRNAs involved in cell proliferation. The protein is Eukaryotic translation initiation factor 3 subunit L of Drosophila virilis (Fruit fly).